A 306-amino-acid polypeptide reads, in one-letter code: D-alanine--D-alanine ligase (306 aa).

The region spanning 100–295 (KQIFRRAGLP…FGQLLERLME (196 aa)) is the ATP-grasp domain. 127–180 (RLPYPLFVKSNTGGSSLRLGRARNRAELDDIMGQIFAAGEEVIMEPVLPGREVT) serves as a coordination point for ATP. Mg(2+) contacts are provided by D249, E262, and N264.

Belongs to the D-alanine--D-alanine ligase family. Mg(2+) serves as cofactor. Mn(2+) is required as a cofactor.

The protein localises to the cytoplasm. The catalysed reaction is 2 D-alanine + ATP = D-alanyl-D-alanine + ADP + phosphate + H(+). The protein operates within cell wall biogenesis; peptidoglycan biosynthesis. Its function is as follows. Cell wall formation. In Desulfovibrio desulfuricans (strain ATCC 27774 / DSM 6949 / MB), this protein is D-alanine--D-alanine ligase.